The sequence spans 247 residues: Probable transcriptional regulatory protein Dvul_0986 (247 aa).

The tract at residues 1 to 22 (MAGHSKWANIQHRKGRQDAKRG) is disordered.

The protein belongs to the TACO1 family.

It localises to the cytoplasm. The sequence is that of Probable transcriptional regulatory protein Dvul_0986 from Nitratidesulfovibrio vulgaris (strain DP4) (Desulfovibrio vulgaris).